Consider the following 391-residue polypeptide: Acetyl-CoA acetyltransferase (391 aa).

Cys-88 functions as the Acyl-thioester intermediate in the catalytic mechanism. Active-site proton acceptor residues include His-347 and Cys-377.

This sequence belongs to the thiolase-like superfamily. Thiolase family. Homotetramer.

The protein localises to the cytoplasm. It carries out the reaction 2 acetyl-CoA = acetoacetyl-CoA + CoA. The protein operates within metabolic intermediate biosynthesis; (R)-mevalonate biosynthesis; (R)-mevalonate from acetyl-CoA: step 1/3. The chain is Acetyl-CoA acetyltransferase (phaA) from Paracoccus denitrificans.